A 392-amino-acid chain; its full sequence is Succinate--CoA ligase [ADP-forming] subunit beta (392 aa).

Residues 9–236 (KELFAAHGVP…PSAADPLEAK (228 aa)) form the ATP-grasp domain. ATP-binding positions include Lys-45, 52-54 (GRG), Val-94, and Glu-99. Residues Asn-191 and Asp-205 each coordinate Mg(2+). Substrate contacts are provided by residues Asn-256 and 318–320 (GIT).

Belongs to the succinate/malate CoA ligase beta subunit family. As to quaternary structure, heterotetramer of two alpha and two beta subunits. The cofactor is Mg(2+).

It carries out the reaction succinate + ATP + CoA = succinyl-CoA + ADP + phosphate. The enzyme catalyses GTP + succinate + CoA = succinyl-CoA + GDP + phosphate. It functions in the pathway carbohydrate metabolism; tricarboxylic acid cycle; succinate from succinyl-CoA (ligase route): step 1/1. Functionally, succinyl-CoA synthetase functions in the citric acid cycle (TCA), coupling the hydrolysis of succinyl-CoA to the synthesis of either ATP or GTP and thus represents the only step of substrate-level phosphorylation in the TCA. The beta subunit provides nucleotide specificity of the enzyme and binds the substrate succinate, while the binding sites for coenzyme A and phosphate are found in the alpha subunit. The chain is Succinate--CoA ligase [ADP-forming] subunit beta from Acidothermus cellulolyticus (strain ATCC 43068 / DSM 8971 / 11B).